Consider the following 361-residue polypeptide: Hydroxycarboxylate dehydrogenase B (361 aa).

Residues H48, 122–124 (GRI), 178–182 (LLDYA), H234, N270, and 313–316 (GEWE) each bind NAD(+).

It belongs to the LDH2/MDH2 oxidoreductase family.

It catalyses the reaction 2-hydroxyglutarate + NADP(+) = 2-oxoglutarate + NADPH + H(+). It carries out the reaction 2-hydroxyglutarate + NAD(+) = 2-oxoglutarate + NADH + H(+). The enzyme catalyses 3-phenyllactate + NADP(+) = 3-phenylpyruvate + NADPH + H(+). The catalysed reaction is 3-phenyllactate + NAD(+) = 3-phenylpyruvate + NADH + H(+). It catalyses the reaction (2R)-2-hydroxy-3-(4-hydroxyphenyl)propanoate + NAD(+) = 3-(4-hydroxyphenyl)pyruvate + NADH + H(+). It carries out the reaction (2R)-2-hydroxy-3-(4-hydroxyphenyl)propanoate + NADP(+) = 3-(4-hydroxyphenyl)pyruvate + NADPH + H(+). The enzyme catalyses (2R)-3-(3,4-dihydroxyphenyl)lactate + NADP(+) = 3-(3,4-dihydroxyphenyl)pyruvate + NADPH + H(+). The catalysed reaction is (2R)-3-(3,4-dihydroxyphenyl)lactate + NAD(+) = 3-(3,4-dihydroxyphenyl)pyruvate + NADH + H(+). Functionally, catalyzes the NAD(P)H-dependent reduction of 2-oxoglutarate, phenylpyruvate and (4-hydroxyphenyl)pyruvate, leading to the respective 2-hydroxycarboxylate in vitro. Shows a preference for NADPH over NADH as a redox partner. Do not catalyze the reverse reactions. In Escherichia coli O157:H7, this protein is Hydroxycarboxylate dehydrogenase B.